The sequence spans 148 residues: SsrA-binding protein (148 aa).

This sequence belongs to the SmpB family.

Its subcellular location is the cytoplasm. Required for rescue of stalled ribosomes mediated by trans-translation. Binds to transfer-messenger RNA (tmRNA), required for stable association of tmRNA with ribosomes. tmRNA and SmpB together mimic tRNA shape, replacing the anticodon stem-loop with SmpB. tmRNA is encoded by the ssrA gene; the 2 termini fold to resemble tRNA(Ala) and it encodes a 'tag peptide', a short internal open reading frame. During trans-translation Ala-aminoacylated tmRNA acts like a tRNA, entering the A-site of stalled ribosomes, displacing the stalled mRNA. The ribosome then switches to translate the ORF on the tmRNA; the nascent peptide is terminated with the 'tag peptide' encoded by the tmRNA and targeted for degradation. The ribosome is freed to recommence translation, which seems to be the essential function of trans-translation. The sequence is that of SsrA-binding protein from Mycoplasma mycoides subsp. mycoides SC (strain CCUG 32753 / NCTC 10114 / PG1).